Here is a 367-residue protein sequence, read N- to C-terminus: MEKSSIYGLTWTKLTEWLEAHGQKKFRATQVWDWLYRKRVKTFEEMSNVPKETIELLTANFVMNTLEEQVVQESTDGTTKYLFKLSDGNLIETVMMKQEYGLSVCVTTQVGCNIGCTFCASGLLKKSRDLTAGEIVEQIMNVQHYLDGRNLEERVSHVVVMGIGEPFDNYDNVMDFLRVINHDKGLAIGARHITVSTSGLAPRIIDFANEDFQVNLAISLHAPNNELRTSIMRINKTYSIEKLMEAIHYYVNKTNRRITFEYIMLKGVNDHKKEALELAALLGEHRHLAYVNLIPYNPVDEHIDYERSTKEDVLAFYDTLKKNGINCVIRREHGTDIDAACGQLRSKQIKRVGVRERMKQKQAALEE.

E92 acts as the Proton acceptor in catalysis. Residues 98–326 (QEYGLSVCVT…YDTLKKNGIN (229 aa)) enclose the Radical SAM core domain. C105 and C341 are joined by a disulfide. The [4Fe-4S] cluster site is built by C112, C116, and C119. S-adenosyl-L-methionine-binding positions include 164–165 (GE), S196, 219–221 (SLH), and N297. C341 serves as the catalytic S-methylcysteine intermediate.

The protein belongs to the radical SAM superfamily. RlmN family. [4Fe-4S] cluster serves as cofactor.

The protein localises to the cytoplasm. The enzyme catalyses adenosine(2503) in 23S rRNA + 2 reduced [2Fe-2S]-[ferredoxin] + 2 S-adenosyl-L-methionine = 2-methyladenosine(2503) in 23S rRNA + 5'-deoxyadenosine + L-methionine + 2 oxidized [2Fe-2S]-[ferredoxin] + S-adenosyl-L-homocysteine. It carries out the reaction adenosine(37) in tRNA + 2 reduced [2Fe-2S]-[ferredoxin] + 2 S-adenosyl-L-methionine = 2-methyladenosine(37) in tRNA + 5'-deoxyadenosine + L-methionine + 2 oxidized [2Fe-2S]-[ferredoxin] + S-adenosyl-L-homocysteine. Functionally, specifically methylates position 2 of adenine 2503 in 23S rRNA and position 2 of adenine 37 in tRNAs. This Listeria welshimeri serovar 6b (strain ATCC 35897 / DSM 20650 / CCUG 15529 / CIP 8149 / NCTC 11857 / SLCC 5334 / V8) protein is Probable dual-specificity RNA methyltransferase RlmN.